The sequence spans 510 residues: Cytochrome P450 monooxygenase penQ (510 aa).

The chain crosses the membrane as a helical span at residues 9–26 (WIVTLIVAATTYCTLRWV). Residues asparagine 148 and asparagine 341 are each glycosylated (N-linked (GlcNAc...) asparagine). Cysteine 448 contributes to the heme binding site. Asparagine 482 carries N-linked (GlcNAc...) asparagine glycosylation.

Belongs to the cytochrome P450 family. It depends on heme as a cofactor.

The protein localises to the membrane. The protein operates within secondary metabolite biosynthesis. Its function is as follows. Cytochrome P450 monooxygenase; part of the gene cluster that mediates the biosynthesis of the indole diterpenes penitrems. The geranylgeranyl diphosphate (GGPP) synthase penG catalyzes the first step in penitrem biosynthesis via conversion of farnesyl pyrophosphate and isopentyl pyrophosphate into geranylgeranyl pyrophosphate (GGPP). Condensation of indole-3-glycerol phosphate with GGPP by the prenyl transferase penC then forms 3-geranylgeranylindole (3-GGI). Epoxidation by the FAD-dependent monooxygenase penM leads to a epoxidized-GGI that is substrate of the terpene cyclase penB for cyclization to yield paspaline. Paspaline is subsequently converted to 13-desoxypaxilline by the cytochrome P450 monooxygenase penP, the latter being then converted to paxilline by the cytochrome P450 monooxygenase penQ. Paxilline is converted to beta-paxitriol via C-10 ketoreduction by the short-chain dehydrogenase PC-15 which can be monoprenylated at the C-20 by the indole diterpene prenyltransferase penD. A two-step elimination (acetylation and elimination) process performed by the O-acetyltransferase PC-16 and the P.simplicissimum ptmI-ortholog not yet identified in P.crustosum, leads to the production of the prenylated form of penijanthine. The FAD-linked oxidoreductase ptmO then converts the prenylated form of penijanthine into PC-M5 which is in turn transformed into PC-M4 by the aromatic dimethylallyltransferase PC-22. A series of oxidation steps involving 4 cytochrome P450 monooxygenases (PC-21, PC-05, PC-23, PC-20) and a FAD-dependent monooxygenase (PC-14) are required for the transformation of PC-M4 to penitrems A and E. Synthesis of these final products is proposed to proceed via penitrems D and C (PC-21, PC-05, PC-14) and penitrems B and F (PC-21, PC-05, PC-14, PC-23). This is Cytochrome P450 monooxygenase penQ from Penicillium crustosum (Blue mold fungus).